Consider the following 431-residue polypeptide: Trigger factor (431 aa).

A PPIase FKBP-type domain is found at 160–245 (EDRVTIDFSG…LKKVEVMVLP (86 aa)).

It belongs to the FKBP-type PPIase family. Tig subfamily.

The protein resides in the cytoplasm. The catalysed reaction is [protein]-peptidylproline (omega=180) = [protein]-peptidylproline (omega=0). Involved in protein export. Acts as a chaperone by maintaining the newly synthesized protein in an open conformation. Functions as a peptidyl-prolyl cis-trans isomerase. The protein is Trigger factor of Actinobacillus succinogenes (strain ATCC 55618 / DSM 22257 / CCUG 43843 / 130Z).